The chain runs to 180 residues: MSTRFQEHYQEKVVADLITKFGYKSVMEVPRITKVTLNMGLGDAVNDKKIIENAVGDLTKVAGQKPVVTKAKKAIAGFKIRQGYPIGAMVTLRGQRMYEFLDRFVTVALPRVRDFRGISGKAFDGRGNYNIGVKEQIIFPEIEYDKIDALRGLNISITTTAKTDEEAKALLAAFKFPFRN.

The protein belongs to the universal ribosomal protein uL5 family. Part of the 50S ribosomal subunit; part of the 5S rRNA/L5/L18/L25 subcomplex. Contacts the 5S rRNA and the P site tRNA. Forms a bridge to the 30S subunit in the 70S ribosome.

Its function is as follows. This is one of the proteins that bind and probably mediate the attachment of the 5S RNA into the large ribosomal subunit, where it forms part of the central protuberance. In the 70S ribosome it contacts protein S13 of the 30S subunit (bridge B1b), connecting the 2 subunits; this bridge is implicated in subunit movement. Contacts the P site tRNA; the 5S rRNA and some of its associated proteins might help stabilize positioning of ribosome-bound tRNAs. This Polynucleobacter asymbioticus (strain DSM 18221 / CIP 109841 / QLW-P1DMWA-1) (Polynucleobacter necessarius subsp. asymbioticus) protein is Large ribosomal subunit protein uL5.